We begin with the raw amino-acid sequence, 155 residues long: Small ribosomal subunit protein uS7cz/uS7cy (155 aa).

The protein belongs to the universal ribosomal protein uS7 family. In terms of assembly, part of the 30S ribosomal subunit.

Its subcellular location is the plastid. It is found in the chloroplast. One of the primary rRNA binding proteins, it binds directly to 16S rRNA where it nucleates assembly of the head domain of the 30S subunit. The sequence is that of Small ribosomal subunit protein uS7cz/uS7cy (rps7-A) from Ipomoea purpurea (Common morning glory).